A 112-amino-acid polypeptide reads, in one-letter code: Nucleoid-associated protein FTM_1023 (112 aa).

The protein belongs to the YbaB/EbfC family. In terms of assembly, homodimer.

It is found in the cytoplasm. Its subcellular location is the nucleoid. Its function is as follows. Binds to DNA and alters its conformation. May be involved in regulation of gene expression, nucleoid organization and DNA protection. This Francisella tularensis subsp. mediasiatica (strain FSC147) protein is Nucleoid-associated protein FTM_1023.